A 309-amino-acid polypeptide reads, in one-letter code: Methionyl-tRNA formyltransferase (309 aa).

Residue 107–110 coordinates (6S)-5,6,7,8-tetrahydrofolate; sequence SLLP.

This sequence belongs to the Fmt family.

The enzyme catalyses L-methionyl-tRNA(fMet) + (6R)-10-formyltetrahydrofolate = N-formyl-L-methionyl-tRNA(fMet) + (6S)-5,6,7,8-tetrahydrofolate + H(+). Functionally, attaches a formyl group to the free amino group of methionyl-tRNA(fMet). The formyl group appears to play a dual role in the initiator identity of N-formylmethionyl-tRNA by promoting its recognition by IF2 and preventing the misappropriation of this tRNA by the elongation apparatus. This is Methionyl-tRNA formyltransferase from Borrelia turicatae (strain 91E135).